A 205-amino-acid chain; its full sequence is MGNPEKLMTQIFDLKFTSKSLQRQARKCEKEEKEQKLKVKKAIEKGNMDGARIYAENAIRKRTEHMNYLRLASRLDAVVARLDTQAKMQVIGKSMANIVKSLDSALATGNLQKMSETMDNFERQFVNMEVQAEFMEGAMAGSTSLSTPETEVNSLMQQVADDYGLEVSVGLPQAAAHAIPAAKEKEKAVDEDDLSRRLAELKARG.

Coiled-coil stretches lie at residues 13 to 51 (DLKF…MDGA) and 109 to 140 (GNLQ…GAMA).

Belongs to the SNF7 family.

Its subcellular location is the cytoplasm. It is found in the endosome membrane. In terms of biological role, involved in ESCRT-dependent multivesicular body (MVB) formation and sorting of endosomal cargo proteins into MVBs. This is ESCRT-related protein CHMP1 from Oryza sativa subsp. japonica (Rice).